Reading from the N-terminus, the 86-residue chain is Small ribosomal subunit protein bS20 (86 aa).

The disordered stretch occupies residues 1-21 (MANTKSAIKAARKSLRLHDRN).

This sequence belongs to the bacterial ribosomal protein bS20 family.

In terms of biological role, binds directly to 16S ribosomal RNA. The polypeptide is Small ribosomal subunit protein bS20 (Opitutus terrae (strain DSM 11246 / JCM 15787 / PB90-1)).